The chain runs to 253 residues: uncharacterized protein (253 aa).

The first 25 residues, 1–25, serve as a signal peptide directing secretion; it reads MRKKKFLSKVSFGSLFLLCGTVLSA. Cys26 carries N-palmitoyl cysteine lipidation. Cys26 carries S-diacylglycerol cysteine lipidation.

The protein belongs to the MG439/MG440 family.

It is found in the cell membrane. This is an uncharacterized protein from Mycoplasma pneumoniae (strain ATCC 29342 / M129 / Subtype 1) (Mycoplasmoides pneumoniae).